The primary structure comprises 75 residues: uncharacterized protein (75 aa).

This is an uncharacterized protein from Halalkalibacterium halodurans (strain ATCC BAA-125 / DSM 18197 / FERM 7344 / JCM 9153 / C-125) (Bacillus halodurans).